The sequence spans 474 residues: Immunoglobulin heavy constant mu (474 aa).

A CH1 region spans residues 1 to 105; it reads GSASAPTLFP…NKEKNVPLPV (105 aa). The Extracellular segment spans residues 1–450; that stretch reads GSASAPTLFP…EEGFENLWAT (450 aa). Ig-like domains are found at residues 6 to 102, 111 to 211, 229 to 319, and 329 to 430; these read PTLF…KNVP, PKVS…QNAS, PSFA…QTIS, and PDVY…RTVD. 2 cysteine pairs are disulfide-bonded: Cys28–Cys88 and Cys134–Cys197. An N-linked (GlcNAc...) (complex) asparagine glycan is attached at Asn46. Residues 106–217 form a CH2 region; the sequence is IAELPPKVSV…QNASSMCVPD (112 aa). An N-linked (GlcNAc...) (complex) asparagine glycan is attached at Asn209. Residues 218 to 323 are CH3; it reads QDTAIRVFAI…LKQTISRPKG (106 aa). 2 disulfides stabilise this stretch: Cys244-Cys303 and Cys351-Cys413. N-linked (GlcNAc...) asparagine glycosylation is found at Asn272 and Asn279. Positions 324–452 are CH4; sequence VALHRPDVYL…GFENLWATAS (129 aa). The tract at residues 437–453 is important for IgM oligomerization; it reads VSADEEGFENLWATAST. Asp440 carries N-linked (GlcNAc...) asparagine glycosylation. Residues 451–471 form a helical membrane-spanning segment; it reads ASTFIVLFLLSLFYSTTVTLF. Topologically, residues 472–474 are cytoplasmic; that stretch reads KVK.

The basic structural unit of both sIgM and mIgM molecules consists of two identical heavy chains and two identical light chains; disulfide-linked. N-terminal variable regions of the heavy and light chains form the antigen binding sites, whereas the C-terminal constant regions of the heavy chains interact with immune receptors to mediate effector functions. As to quaternary structure, part of IgM antibody. Forms high order oligomers, homopentamers stabilized by the JCHAIN and homohexamers that lack JCHAIN. The oligomerization amplifies an inherently low affinity of IgM antibodies for the antigen by multi-point attachment (avidity). Adjacent IgM protomers associate via interchain disulfide links to form an asymmetric pentameric structure with a 50 degree gap. A single copy of JCHAIN is covalently linked to the first and the fifth IgM monomers via interchain disulfide bonds thus closing the pentamer ring. Only JCHAIN-containing IgM binds PIGR secretory component (via D1-CDR1 region); this interaction is a prerequisite for IgM transcytosis across mucosal epithelium. Pentameric sIgM interacts (via CH4 domain) with FCRM (via Ig-like domain); the interaction is glycan-independent and multivalent theoretically involving up to eight binding sites for the IgM pentamer. Interacts with FCAMR; this interaction facilitates the endocytosis of IgM-coated microbes or IgM-antigen immune complexes. Antigen-bound IgM (via the Fc region) binds to globular domains of C1q component of the complement system, all three modules C1QA, C1QB and C1QC being involved in IgM binding; this interaction is multivalent. Pentameric sIgM (via Fc region) interacts with CD5L (via SRCR2) through interchain disulfide-linkages; this interaction protects CD5L from renal excretion and provides for high levels of CD5L in circulation. In terms of assembly, part of IgM B cell receptor complex on pre-B cells, immature and mature B cells. The BCR complex consists of one membrane-bound IgM molecule responsible for antigen binding, non-covalently associated with CD79A and CD79B signaling chains. N-glycosylated; important for IgM secretion and its localization at the plasma membrane. The interaction with FCMR is glycan-independent.

It localises to the secreted. The protein resides in the cell membrane. In terms of biological role, constant region of immunoglobulin heavy chains. Immunoglobulins, also known as antibodies, are membrane-bound or secreted glycoproteins produced by B lymphocytes. In the recognition phase of humoral immunity, the membrane-bound immunoglobulins serve as receptors which, upon binding of a specific antigen, trigger the clonal expansion and differentiation of B lymphocytes into immunoglobulins-secreting plasma cells. Secreted immunoglobulins mediate the effector phase of humoral immunity, which results in the elimination of bound antigens. The antigen binding site is formed by the variable domain of one heavy chain, together with that of its associated light chain. Thus, each immunoglobulin has two antigen binding sites with remarkable affinity for a particular antigen. The variable domains are assembled by a process called V-(D)-J rearrangement and can then be subjected to somatic hypermutations which, after exposure to antigen and selection, allow affinity maturation for a particular antigen. Functionally, constant region of secreted IgM (sIgM), also known as the Fc region of IgM antibody. Able to multimerize, forms high order polymers, mainly pentamers and occasionally hexamers, providing for multivalency and high avidity recognition of antigens. Natural sIgM are polyreactive and recognize conserved self- and pathogen-derived structures, whereas immune sIgM are secreted only upon exposure to pathogens and are antigen-specific. Both natural and immune sIgM are required for an efficient humoral immune response to infection. Mediates sIgM effector functions mostly via Fc receptors and the complement system. On lymphoid cells binds high-affinity Fc receptor FCMR and promotes induction of an efficient neutralizing IgG response while maintaining tolerance to self-antigens. Recruits C1q complement component to initiate the classical complement pathway, facilitating the recognition and neutralization of pathogens by the host. Together with C1q and mannose-binding lectin promotes the phagocytosis of apoptotic cells by macrophages, ensuring the clearance of potential autoimmune epitopes from tissues. Involved in mucosal immunity. It is transported by transcytosis across mucosal epithelium by PIGR and secreted on the apical side in complex with PIGR secretory component to scan mucosal lining for pathogens. IgM-antigen complexes undergo FCMR-mediated retrotranscytosis across mucosal M cells toward antigen-presenting cells in mucosal lymphoid tissues. Its function is as follows. Constant region of membrane-bound IgM, part of the B cell receptor complex (BCR). IgM BCR provides constitutive tonic signaling for B cell survival. Mediates pre-BCR signaling that regulates B cell selection and rearrangement of Ig genes via allelic exclusion. This Homo sapiens (Human) protein is Immunoglobulin heavy constant mu.